Consider the following 304-residue polypeptide: Nod factor export ATP-binding protein I (304 aa).

The region spanning 6 to 236 is the ABC transporter domain; the sequence is IDLAGVKKSF…HIGCQVIEIF (231 aa). 38 to 45 is a binding site for ATP; that stretch reads GPNGAGKS.

The protein belongs to the ABC transporter superfamily. Lipooligosaccharide exporter (TC 3.A.1.102) family. As to quaternary structure, the complex is composed of two ATP-binding proteins (NodI) and two transmembrane proteins (NodJ).

The protein localises to the cell inner membrane. Functionally, part of the ABC transporter complex NodIJ involved in the export of the nodulation factors (Nod factors), the bacterial signal molecules that induce symbiosis and subsequent nodulation induction. Nod factors are LCO (lipo-chitin oligosaccharide), a modified beta-1,4-linked N-acetylglucosamine oligosaccharide. This subunit is responsible for energy coupling to the transport system. The sequence is that of Nod factor export ATP-binding protein I from Rhizobium sp. (strain N33).